Consider the following 448-residue polypeptide: Ribonuclease J (448 aa).

Zn(2+) contacts are provided by His81, His83, Asp85, His86, His151, and Asp173. 383–387 (HVSGH) lines the substrate pocket. Residue His409 participates in Zn(2+) binding.

This sequence belongs to the metallo-beta-lactamase superfamily. RNA-metabolizing metallo-beta-lactamase-like family. Archaeal RNase J subfamily. As to quaternary structure, forms homodimers on heating to 60 degrees Celsius which may be the active form. The cofactor is Zn(2+).

It localises to the cytoplasm. Its activity is regulated as follows. Inhibited by imidazole. Its function is as follows. A 5'-3' exoribonuclease with a strong reference for 5'-monophosphorylated RNA and no endoribonuclease activty. Also has robust 5'-'3 nuclease activity on single-stranded DNA (exodeoxyribonuclease, exoDNase). May be involved in RNA degradation. This chain is Ribonuclease J, found in Methanocaldococcus jannaschii (strain ATCC 43067 / DSM 2661 / JAL-1 / JCM 10045 / NBRC 100440) (Methanococcus jannaschii).